A 467-amino-acid chain; its full sequence is GTPase Der (467 aa).

EngA-type G domains lie at 3 to 167 and 179 to 352; these read PTLV…PYEE and PVIA…AAAR. GTP contacts are provided by residues 9–16, 56–60, 119–122, 185–192, 232–236, and 297–300; these read GRPNVGKS, DTGGF, NKTE, DTAGL, and NKWD. Residues 353 to 437 enclose the KH-like domain; the sequence is AHIPTPKLTR…PLRVEFRTGH (85 aa). The interval 434–467 is disordered; that stretch reads RTGHNPYAGKKTPLTEEEARRAHSRRRRNRKKYG. Positions 455-467 are enriched in basic residues; sequence AHSRRRRNRKKYG.

This sequence belongs to the TRAFAC class TrmE-Era-EngA-EngB-Septin-like GTPase superfamily. EngA (Der) GTPase family. Associates with the 50S ribosomal subunit.

In terms of biological role, GTPase that plays an essential role in the late steps of ribosome biogenesis. In Nitrosomonas europaea (strain ATCC 19718 / CIP 103999 / KCTC 2705 / NBRC 14298), this protein is GTPase Der.